The primary structure comprises 377 residues: Flagellin D (377 aa).

2 coiled-coil regions span residues Ser103–Thr129 and Ala310–Thr339.

Belongs to the bacterial flagellin family. Heteromer of multiple flagellin subunits including FlaA, FlaB, FlaC, FlaD and FlaE.

Its subcellular location is the secreted. The protein resides in the bacterial flagellum. Flagellin is the subunit protein which polymerizes to form the filaments of bacterial flagella. FlaD is not essential for flagellar synthesis and motility. This is Flagellin D (flaD) from Vibrio cholerae serotype O1 (strain ATCC 39315 / El Tor Inaba N16961).